Here is a 756-residue protein sequence, read N- to C-terminus: Cellulose synthase catalytic subunit [UDP-forming] (756 aa).

A run of 4 helical transmembrane segments spans residues 27–47 (ASYI…TVTL), 49–69 (NNEQ…VGRG), 106–126 (GILG…LFLS), and 167–187 (LTVL…VYIL). A catalytic subdomain A region spans residues 147 to 242 (DWPTVDIFIP…YILILDCDHI (96 aa)). Asp189 is a catalytic residue. Positions 238 and 240 each coordinate substrate. The tract at residues 319 to 379 (EAIESIGGFA…GQRMRWARGM (61 aa)) is catalytic subdomain B. Asp335 is a catalytic residue. Transmembrane regions (helical) follow at residues 409–429 (FFFA…LFAG), 432–452 (IIAA…FHSI), 470–490 (VYET…LLFP), 517–537 (NIIF…ELIV), and 551–571 (LLNC…IAVG). The region spanning 576–681 (QVRYNHRVEA…ERDIVRFVFG (106 aa)) is the PilZ domain. Positions 721–756 (NSRPKKKPLALPVERREPTTIHSGQTQEGKISRAAS) are disordered. Polar residues predominate over residues 740-756 (TIHSGQTQEGKISRAAS).

Belongs to the glycosyltransferase 2 family. Requires Mg(2+) as cofactor.

The protein localises to the cell inner membrane. It catalyses the reaction [(1-&gt;4)-beta-D-glucosyl](n) + UDP-alpha-D-glucose = [(1-&gt;4)-beta-D-glucosyl](n+1) + UDP + H(+). Its pathway is glycan metabolism; bacterial cellulose biosynthesis. Its activity is regulated as follows. Activated by bis-(3'-5') cyclic diguanylic acid (c-di-GMP). Catalytic subunit of cellulose synthase. It polymerizes uridine 5'-diphosphate glucose to cellulose. The thick cellulosic mats generated by this enzyme probably provide a specialized protective environment to the bacterium. This chain is Cellulose synthase catalytic subunit [UDP-forming] (bcsA), found in Komagataeibacter sucrofermentans (strain ATCC 700178 / DSM 15973 / CECT 7291 / JCM 9730 / LMG 18788 / BPR 2001) (Acetobacter xylinus subsp. sucrofermentans).